We begin with the raw amino-acid sequence, 221 residues long: Triosephosphate isomerase (221 aa).

8–10 contacts substrate; that stretch reads NLK. The Electrophile role is filled by H92. E140 acts as the Proton acceptor in catalysis. Substrate is bound by residues I145, G180, and 201-202; that span reads AS.

This sequence belongs to the triosephosphate isomerase family. As to quaternary structure, homotetramer; dimer of dimers.

The protein resides in the cytoplasm. The enzyme catalyses D-glyceraldehyde 3-phosphate = dihydroxyacetone phosphate. Its pathway is carbohydrate biosynthesis; gluconeogenesis. The protein operates within carbohydrate degradation; glycolysis; D-glyceraldehyde 3-phosphate from glycerone phosphate: step 1/1. Its function is as follows. Involved in the gluconeogenesis. Catalyzes stereospecifically the conversion of dihydroxyacetone phosphate (DHAP) to D-glyceraldehyde-3-phosphate (G3P). The polypeptide is Triosephosphate isomerase (Methanococcoides burtonii (strain DSM 6242 / NBRC 107633 / OCM 468 / ACE-M)).